The following is a 1035-amino-acid chain: Teashirt homolog 2 (1035 aa).

Residues 1–92 (MPRRKQQAPK…ESLLSDASDQ (92 aa)) are disordered. The stretch at 13–42 (AGYAQEEQLKEEEEIKEEEEEEEDSGSVAQ) forms a coiled coil. Over residues 21–37 (LKEEEEIKEEEEEEEDS) the composition is skewed to acidic residues. Composition is skewed to polar residues over residues 39–49 (SVAQLQGSNDP) and 66–92 (SYQN…ASDQ). Residue lysine 189 forms a Glycyl lysine isopeptide (Lys-Gly) (interchain with G-Cter in SUMO2) linkage. 2 consecutive C2H2-type zinc fingers follow at residues 216 to 240 (FRCR…ETGH) and 276 to 300 (LKCM…KTKH). Residues 240–266 (HYQDDNRKKDKLRPTSYSKPRKRAFQD) form a disordered region. Glycyl lysine isopeptide (Lys-Gly) (interchain with G-Cter in SUMO2) cross-links involve residues lysine 307 and lysine 316. The segment at 381–405 (LKCMECGSSHDTLQQLTTHMMVTGH) adopts a C2H2-type 3; atypical zinc-finger fold. Lysine 418 participates in a covalent cross-link: Glycyl lysine isopeptide (Lys-Gly) (interchain with G-Cter in SUMO2). The span at 432-450 (SLSDAPSSDSLAPKPSSNS) shows a compositional bias: low complexity. The segment at 432–496 (SLSDAPSSDS…DPLQKPLDPA (65 aa)) is disordered. The segment covering 460 to 483 (ELKRESKKEKPEELRTDEKVLKSE) has biased composition (basic and acidic residues). Glycyl lysine isopeptide (Lys-Gly) (interchain with G-Cter in SUMO2) cross-links involve residues lysine 462, lysine 481, lysine 498, and lysine 602. 2 disordered regions span residues 600–674 (QVKK…VEPV) and 764–791 (QPID…PQKH). The span at 601-669 (VKKEPEDKEE…KDGGEKEKAQ (69 aa)) shows a compositional bias: basic and acidic residues. Glycyl lysine isopeptide (Lys-Gly) (interchain with G-Cter in SUMO2) cross-links involve residues lysine 801 and lysine 821. Positions 842–912 (RKGRQSNWNP…NVKYQLRKTG (71 aa)) form a DNA-binding region, homeobox. The C2H2-type 4 zinc finger occupies 927 to 949 (FYCSDCASQFRTPSTYISHLESH). Residues 968-977 (VEQEISRVSS) show a composition bias toward low complexity. 2 disordered regions span residues 968–987 (VEQE…TIAG) and 1015–1035 (SKTH…VDEE). Serine 981 is modified (phosphoserine). Residues 995–1018 (FKCKLCCRTFVSKHAVKLHLSKTH) form a C2H2-type 5 zinc finger.

It belongs to the teashirt C2H2-type zinc-finger protein family. In terms of assembly, interacts (via homeobox domain) with APBB1 (via PID domain 1). In terms of processing, sumoylated.

It localises to the nucleus. Functionally, probable transcriptional regulator involved in developmental processes. May act as a transcriptional repressor (Potential). The chain is Teashirt homolog 2 (TSHZ2) from Sus scrofa (Pig).